An 873-amino-acid polypeptide reads, in one-letter code: Potassium voltage-gated channel subfamily KQT member 3 (873 aa).

The tract at residues 1–41 is disordered; the sequence is MGLKARRAAGAAGGGGGEGGGGGGGAANPAGGDSAVAGDEE. Residues 1-121 are Cytoplasmic-facing; it reads MGLKARRAAG…IYDALERPRG (121 aa). The segment covering 11–26 has biased composition (gly residues); the sequence is AAGGGGGEGGGGGGGA. Thr-82 is subject to Phosphothreonine. Residues 122–144 traverse the membrane as a helical segment; the sequence is WALLYHALVFLIVLGCLILAVLT. The Extracellular portion of the chain corresponds to 145 to 154; that stretch reads TFKEYETVSG. A helical transmembrane segment spans residues 155–176; sequence DWLLLLETFAIFIFGAEFALRI. Topologically, residues 177–194 are cytoplasmic; it reads WAAGCCCRYKGWRGRLKF. The helical transmembrane segment at 195–214 threads the bilayer; sequence ARKPLCMLDIFVLIASVPVV. Residues 215–226 are Extracellular-facing; sequence AVGNQGNVLATS. Residues 227–245 form a helical; Voltage-sensor membrane-spanning segment; it reads LRSLRFLQILRMLRMDRRG. A 1,2-diacyl-sn-glycero-3-phospho-(1D-myo-inositol-4,5-bisphosphate) is bound at residue Arg-244. Residues 246 to 257 lie on the Cytoplasmic side of the membrane; sequence GTWKLLGSAICA. Residues 258 to 283 form a helical membrane-spanning segment; sequence HSKELITAWYIGFLTLILSSFLVYLV. Lys-260 provides a ligand contact to a 1,2-diacyl-sn-glycero-3-phospho-(1D-myo-inositol-4,5-bisphosphate). Residues 284-303 are Extracellular-facing; sequence EKDVPEMDAQGEEMKEEFET. The pore-forming intramembrane region spans 304 to 316; it reads YADALWWGLITLA. Positions 317 to 322 match the Selectivity filter motif; the sequence is TIGYGD. The Extracellular portion of the chain corresponds to 317–327; it reads TIGYGDKTPKT. Residues 328-354 form a helical membrane-spanning segment; sequence WEGRLIAATFSLIGVSFFALPAGILGS. At 355-873 the chain is on the cytoplasmic side; it reads GLALKVQEQH…SIWTPSNKPT (519 aa). A mediates interaction with calmodulin region spans residues 357 to 538; that stretch reads ALKVQEQHRQ…RLYKKKFKET (182 aa). A 1,2-diacyl-sn-glycero-3-phospho-(1D-myo-inositol-4,5-bisphosphate) is bound at residue Lys-367. Disordered regions lie at residues 575 to 603, 723 to 742, and 766 to 873; these read PGPPSTPKHKKSQKGSAFTYPSQQSPRNE, RGGPSSTKAQANLPSSGSTY, and ELQG…NKPT. Polar residues-rich tracts occupy residues 588–601, 725–741, and 844–873; these read KGSAFTYPSQQSPR, GPSSTKAQANLPSSGST, and DPFTPSGSMPMSSTGDGISDSIWTPSNKPT.

Belongs to the potassium channel family. KQT (TC 1.A.1.15) subfamily. Kv7.3/KCNQ3 sub-subfamily. In terms of assembly, heterotetramer with KCNQ2; forms heterotetrameric native M-channel responsible for the M-current. Interacts with calmodulin; the interaction is calcium-independent, constitutive and participates in the proper assembly of a functional M-channel. Heteromultimer with KCNQ5. May associate with KCNE2. Interacts with IQCJ-SCHIP1. Interacts (via the pore module) with SLC5A3/SMIT1; forms a coregulatory complex that alters ion selectivity, voltage dependence and gating kinetics of the channel. In terms of processing, KCNQ2/KCNQ3 are ubiquitinated by NEDD4L. Ubiquitination leads to protein degradation. Degradation induced by NEDD4L is inhibited by USP36. Expressed in dorsal root ganglion (DRG) neurons.

It localises to the cell membrane. It catalyses the reaction K(+)(in) = K(+)(out). The catalysed reaction is Rb(+)(in) = Rb(+)(out). It carries out the reaction Cs(+)(in) = Cs(+)(out). The enzyme catalyses Na(+)(in) = Na(+)(out). Phosphatidylinositol-4,5-bisphosphate (PIP2) potentiates the activation of KCNQ channels by enhancing the electro-mechanical coupling of the voltage-sensing domain (VSD) and the pore-forming domain (PD). In the closed state of the channel, PIP2 is anchored at the S2-S3 loop; upon channel activation, PIP2 interacts with the S4-S5 linker and is involved in channel gating. Calcium suppresses KCNQ2-KCNQ3 channel currents, with calcium-bound calmodulin inducing a change in channel configuration which leads to the reduction of channel affinity for PIP2 and subsequent current suppression. In terms of biological role, pore-forming subunit of the voltage-gated potassium (Kv) M-channel which is responsible for the M-current, a key controller of neuronal excitability. M-channel is composed of pore-forming subunits KCNQ2 and KCNQ3 assembled as heterotetramers. The native M-current has a slowly activating and deactivating potassium conductance which plays a critical role in determining the subthreshold electrical excitability of neurons as well as the responsiveness to synaptic inputs. M-channel is selectively permeable in vitro to other cations besides potassium, in decreasing order of affinity K(+) &gt; Rb(+) &gt; Cs(+) &gt; Na(+). M-channel association with SLC5A3/SMIT1 alters channel ion selectivity, increasing Na(+) and Cs(+) permeation relative to K(+). Suppressed by activation of M1 muscarinic acetylcholine receptors. KCNQ3 also associates with KCNQ5 to form a functional channel in vitro and may also contribute to the M-current in brain. This is Potassium voltage-gated channel subfamily KQT member 3 from Mus musculus (Mouse).